A 444-amino-acid chain; its full sequence is MAFSRFYLLTALYTGGILASSAYGIPSNYPEHHHRLIERLKKNSTQDSDSSPSESSPHPRQEPRRHVLTPVHNVLKDRPCDEGLSISKLLHSIEKETNSQISVDFTILPQWFYPKKAALATVDEKQPTWQFYISPNVSWQLYNSPTAGVGSIDFSYTLIRYWRNSAQNANNAAGIAGGINDYSSRTNTLSQLTFSQTFPGDILTVAMGQYSLYSIDGTLYDNDQQSGFISYALSQNASATYSLGSVGAYVQFTPTPSINIQAGFQDAYNIVGTSFDVYNLTKNKYNFYGYFSWAPQCKLGNGQYSALIYSTRKVPQQPTQTTGWSLNFGQHLGEKLYVFGRWNGATGTAINLNRSYVLGLASANPINRNSQDLLGAACSISKVNPKVVTEKRIRKYETVIETFATIGFGPHISLTPDLQIYIHPALRPDKRSAKVYGVRANFSA.

The signal sequence occupies residues 1–19 (MAFSRFYLLTALYTGGILA). Positions 42–68 (KNSTQDSDSSPSESSPHPRQEPRRHVL) are disordered. Low complexity predominate over residues 46–56 (QDSDSSPSESS).

Belongs to the OprB family.

The protein localises to the cell outer membrane. Functionally, facilitates L-arginine uptake, as part of the AaxABC system. The arginine uptake by the bacterium in the macrophage may be a virulence factor against the host innate immune response. The sequence is that of Porin AaxA (aaxA) from Chlamydia felis (strain Fe/C-56) (Chlamydophila felis).